Consider the following 444-residue polypeptide: ATP-dependent protease ATPase subunit HslU (444 aa).

ATP is bound by residues I18, 60-65, D256, E322, and R394; that span reads GVGKTE.

The protein belongs to the ClpX chaperone family. HslU subfamily. As to quaternary structure, a double ring-shaped homohexamer of HslV is capped on each side by a ring-shaped HslU homohexamer. The assembly of the HslU/HslV complex is dependent on binding of ATP.

Its subcellular location is the cytoplasm. In terms of biological role, ATPase subunit of a proteasome-like degradation complex; this subunit has chaperone activity. The binding of ATP and its subsequent hydrolysis by HslU are essential for unfolding of protein substrates subsequently hydrolyzed by HslV. HslU recognizes the N-terminal part of its protein substrates and unfolds these before they are guided to HslV for hydrolysis. The sequence is that of ATP-dependent protease ATPase subunit HslU from Buchnera aphidicola subsp. Cinara cedri (strain Cc).